The sequence spans 494 residues: Glycerol kinase (494 aa).

Thr-12 is an ADP binding site. ATP-binding residues include Thr-12, Thr-13, and Ser-14. Sn-glycerol 3-phosphate is bound at residue Thr-12. Arg-16 provides a ligand contact to ADP. Sn-glycerol 3-phosphate-binding residues include Arg-82, Glu-83, Tyr-134, and Asp-244. The glycerol site is built by Arg-82, Glu-83, Tyr-134, Asp-244, and Gln-245. ADP contacts are provided by Thr-266 and Gly-309. Residues Thr-266, Gly-309, Gln-313, and Gly-410 each contribute to the ATP site. ADP contacts are provided by Gly-410 and Asn-414.

This sequence belongs to the FGGY kinase family. Homotetramer and homodimer (in equilibrium).

The catalysed reaction is glycerol + ATP = sn-glycerol 3-phosphate + ADP + H(+). The protein operates within polyol metabolism; glycerol degradation via glycerol kinase pathway; sn-glycerol 3-phosphate from glycerol: step 1/1. Its activity is regulated as follows. Activated by phosphorylation and inhibited by fructose 1,6-bisphosphate (FBP). Its function is as follows. Key enzyme in the regulation of glycerol uptake and metabolism. Catalyzes the phosphorylation of glycerol to yield sn-glycerol 3-phosphate. In Desulfitobacterium hafniense (strain DSM 10664 / DCB-2), this protein is Glycerol kinase.